The chain runs to 206 residues: uncharacterized protein (206 aa).

This is an uncharacterized protein from Saccharomyces cerevisiae (strain ATCC 204508 / S288c) (Baker's yeast).